We begin with the raw amino-acid sequence, 590 residues long: Heat shock protein 60, mitochondrial (590 aa).

The N-terminal 43 residues, 1–43, are a transit peptide targeting the mitochondrion; the sequence is MQRALSSTSRASVLSSAPTRAPVSRFRSAGLSLQQQRFAHKEL.

The protein belongs to the chaperonin (HSP60) family.

Its subcellular location is the mitochondrion. Functionally, may participate in assembly and/or disassembly of proteins imported into the mitochondrion. HSP60 are ATPases and have affinity for unfolded proteins. This Ajellomyces capsulatus (Darling's disease fungus) protein is Heat shock protein 60, mitochondrial (HSP60).